The primary structure comprises 258 residues: uncharacterized protein (258 aa).

The next 5 helical transmembrane spans lie at 14 to 34 (LAFPWLSAVILNSFLLALAAI), 53 to 73 (VIIWAALGWRGYLVVLAYFFV), 110 to 130 (AALCALAIAFGPEPWQLWLAL), 185 to 205 (GLALAVLGYGVGLISFGGIIF), and 238 to 258 (GINTFLGAAIAIGIEATAQLI).

The protein belongs to the TMEM19 family.

It localises to the cell membrane. This is an uncharacterized protein from Synechocystis sp. (strain ATCC 27184 / PCC 6803 / Kazusa).